The sequence spans 332 residues: tRNA(Ile)-lysidine synthase (332 aa).

39-44 lines the ATP pocket; sequence SGGADS.

The protein belongs to the tRNA(Ile)-lysidine synthase family.

It is found in the cytoplasm. The catalysed reaction is cytidine(34) in tRNA(Ile2) + L-lysine + ATP = lysidine(34) in tRNA(Ile2) + AMP + diphosphate + H(+). In terms of biological role, ligates lysine onto the cytidine present at position 34 of the AUA codon-specific tRNA(Ile) that contains the anticodon CAU, in an ATP-dependent manner. Cytidine is converted to lysidine, thus changing the amino acid specificity of the tRNA from methionine to isoleucine. In Leifsonia xyli subsp. xyli (strain CTCB07), this protein is tRNA(Ile)-lysidine synthase.